Consider the following 98-residue polypeptide: Elicitin Vex1 (98 aa).

Cystine bridges form between Cys3–Cys71, Cys27–Cys56, and Cys51–Cys95. Asn92 carries an N-linked (GlcNAc...) asparagine glycan.

This sequence belongs to the elicitin family.

The protein localises to the secreted. Its function is as follows. Induces local and distal defense responses (incompatible hypersensitive reaction) in plants from the solanaceae and cruciferae families. Elicits leaf necrosis and causes the accumulation of pathogenesis-related proteins. Might interact with the lipidic molecules of the plasma membrane. This Phytopythium vexans (Damping-off fungus) protein is Elicitin Vex1.